A 182-amino-acid polypeptide reads, in one-letter code: Peptidoglycan-recognition protein SB2 (182 aa).

The signal sequence occupies residues 1–17 (MKLQLALVLCGLTLALG). The region spanning 40–165 (PVRLIIIHHT…CQTKATACPG (126 aa)) is the N-acetylmuramoyl-L-alanine amidase domain. His-47 provides a ligand contact to Zn(2+). A disulfide bridge connects residues Cys-54 and Cys-60. N-linked (GlcNAc...) asparagine glycosylation occurs at Asn-149. Residues His-155 and Cys-163 each contribute to the Zn(2+) site.

The protein belongs to the N-acetylmuramoyl-L-alanine amidase 2 family. Requires Zn(2+) as cofactor.

It is found in the secreted. The enzyme catalyses Hydrolyzes the link between N-acetylmuramoyl residues and L-amino acid residues in certain cell-wall glycopeptides.. Functionally, N-acetylmuramyl-L-alanine amidase involved in innate immunity by degrading bacterial peptidoglycans (PGN). Probably plays a scavenger role by digesting biologically active PGN into biologically inactive fragments. Has no direct bacteriolytic activity. This chain is Peptidoglycan-recognition protein SB2 (PGRP-SB2), found in Drosophila simulans (Fruit fly).